Here is a 328-residue protein sequence, read N- to C-terminus: D-cysteine desulfhydrase (328 aa).

N6-(pyridoxal phosphate)lysine is present on Lys-51.

It belongs to the ACC deaminase/D-cysteine desulfhydrase family. In terms of assembly, homodimer. It depends on pyridoxal 5'-phosphate as a cofactor.

The catalysed reaction is D-cysteine + H2O = hydrogen sulfide + pyruvate + NH4(+) + H(+). Catalyzes the alpha,beta-elimination reaction of D-cysteine and of several D-cysteine derivatives. It could be a defense mechanism against D-cysteine. This chain is D-cysteine desulfhydrase, found in Salmonella typhimurium (strain LT2 / SGSC1412 / ATCC 700720).